The primary structure comprises 196 residues: ATP-dependent Clp protease proteolytic subunit (196 aa).

The Nucleophile role is filled by S101. The active site involves H126.

This sequence belongs to the peptidase S14 family. In terms of assembly, component of the chloroplastic Clp protease core complex.

The protein resides in the plastid. It localises to the chloroplast stroma. It carries out the reaction Hydrolysis of proteins to small peptides in the presence of ATP and magnesium. alpha-casein is the usual test substrate. In the absence of ATP, only oligopeptides shorter than five residues are hydrolyzed (such as succinyl-Leu-Tyr-|-NHMec, and Leu-Tyr-Leu-|-Tyr-Trp, in which cleavage of the -Tyr-|-Leu- and -Tyr-|-Trp bonds also occurs).. Functionally, cleaves peptides in various proteins in a process that requires ATP hydrolysis. Has a chymotrypsin-like activity. Plays a major role in the degradation of misfolded proteins. In Nicotiana tabacum (Common tobacco), this protein is ATP-dependent Clp protease proteolytic subunit.